We begin with the raw amino-acid sequence, 486 residues long: Glutamyl-tRNA(Gln) amidotransferase subunit A (486 aa).

Catalysis depends on charge relay system residues lysine 74 and serine 149. Residue serine 173 is the Acyl-ester intermediate of the active site.

Belongs to the amidase family. GatA subfamily. As to quaternary structure, heterotrimer of A, B and C subunits.

It catalyses the reaction L-glutamyl-tRNA(Gln) + L-glutamine + ATP + H2O = L-glutaminyl-tRNA(Gln) + L-glutamate + ADP + phosphate + H(+). Functionally, allows the formation of correctly charged Gln-tRNA(Gln) through the transamidation of misacylated Glu-tRNA(Gln) in organisms which lack glutaminyl-tRNA synthetase. The reaction takes place in the presence of glutamine and ATP through an activated gamma-phospho-Glu-tRNA(Gln). The polypeptide is Glutamyl-tRNA(Gln) amidotransferase subunit A (Prochlorococcus marinus (strain MIT 9313)).